Reading from the N-terminus, the 239-residue chain is Small ribosomal subunit protein uS2 (239 aa).

Belongs to the universal ribosomal protein uS2 family.

This Francisella tularensis subsp. tularensis (strain FSC 198) protein is Small ribosomal subunit protein uS2.